The sequence spans 255 residues: Hydroxylmethylpyrimidine kinase (255 aa).

The pyridoxal 5'-phosphate site is built by Gly-18, Gln-43, and Asn-110. Gln-43 serves as a coordination point for 4-amino-5-hydroxymethyl-2-methylpyrimidine. A disulfide bond links Cys-195 and Cys-207. Ser-208 provides a ligand contact to pyridoxal 5'-phosphate.

The protein belongs to the ThiD family. Homodimer. In terms of processing, crystals show a disulfide bond between Cys-195 and Cys-207. This disulfide is possibly an artifact of the purification and crystallization conditions. However, as it is adjacent to the conserved GSGC of the oxyanion hole, this disulfide may help to orient the backbone amides toward the oxanion intermediate.

It catalyses the reaction 4-amino-5-hydroxymethyl-2-methylpyrimidine + ATP = 4-amino-2-methyl-5-(phosphooxymethyl)pyrimidine + ADP + H(+). It participates in cofactor biosynthesis; thiamine diphosphate biosynthesis. Inhibited by pyridoxal phosphate at high micromolar concentrations. In terms of biological role, catalyzes the phosphorylation of hydroxymethylpyrimidine (HMP) to hydroxymethylpyrimidine phosphate (HMP-P). Unlike other HMPKs, it cannot catalyze the phosphorylation of HMP-P to generate the diphosphate HMP-PP. Shows no activity with pyridoxal, pyridoxamine or pyridoxine. Does not show phosphatase activity. This chain is Hydroxylmethylpyrimidine kinase, found in Acinetobacter baumannii (strain IS-123).